A 197-amino-acid chain; its full sequence is Protein GrpE (197 aa).

The disordered stretch occupies residues 1–41 (MSSKEQKTPEGQAPEEIITEQHEEVEAVEPDASAEQVDPRD).

Belongs to the GrpE family. As to quaternary structure, homodimer.

It localises to the cytoplasm. Its function is as follows. Participates actively in the response to hyperosmotic and heat shock by preventing the aggregation of stress-denatured proteins, in association with DnaK and GrpE. It is the nucleotide exchange factor for DnaK and may function as a thermosensor. Unfolded proteins bind initially to DnaJ; upon interaction with the DnaJ-bound protein, DnaK hydrolyzes its bound ATP, resulting in the formation of a stable complex. GrpE releases ADP from DnaK; ATP binding to DnaK triggers the release of the substrate protein, thus completing the reaction cycle. Several rounds of ATP-dependent interactions between DnaJ, DnaK and GrpE are required for fully efficient folding. This is Protein GrpE from Enterobacter sp. (strain 638).